Consider the following 179-residue polypeptide: Ribosome maturation factor RimM (179 aa).

In terms of domain architecture, PRC barrel spans 96-179; sequence DNEFYWVDLI…KITVDWGLDY (84 aa).

This sequence belongs to the RimM family. In terms of assembly, binds ribosomal protein uS19.

The protein localises to the cytoplasm. An accessory protein needed during the final step in the assembly of 30S ribosomal subunit, possibly for assembly of the head region. Essential for efficient processing of 16S rRNA. May be needed both before and after RbfA during the maturation of 16S rRNA. It has affinity for free ribosomal 30S subunits but not for 70S ribosomes. The chain is Ribosome maturation factor RimM from Janthinobacterium sp. (strain Marseille) (Minibacterium massiliensis).